Reading from the N-terminus, the 137-residue chain is Small ribosomal subunit protein uS12 (137 aa).

Residues 1-28 are disordered; it reads MPTINQLVRKPRKSKAKKSDSPALNKGF. Position 102 is a 3-methylthioaspartic acid (D102).

This sequence belongs to the universal ribosomal protein uS12 family. Part of the 30S ribosomal subunit. Contacts proteins S8 and S17. May interact with IF1 in the 30S initiation complex.

Its function is as follows. With S4 and S5 plays an important role in translational accuracy. Functionally, interacts with and stabilizes bases of the 16S rRNA that are involved in tRNA selection in the A site and with the mRNA backbone. Located at the interface of the 30S and 50S subunits, it traverses the body of the 30S subunit contacting proteins on the other side and probably holding the rRNA structure together. The combined cluster of proteins S8, S12 and S17 appears to hold together the shoulder and platform of the 30S subunit. The polypeptide is Small ribosomal subunit protein uS12 (Staphylococcus carnosus (strain TM300)).